A 38-amino-acid polypeptide reads, in one-letter code: Large ribosomal subunit protein bL36 (38 aa).

This sequence belongs to the bacterial ribosomal protein bL36 family.

The polypeptide is Large ribosomal subunit protein bL36 (Prosthecochloris aestuarii (strain DSM 271 / SK 413)).